The primary structure comprises 474 residues: Probable periplasmic serine endoprotease DegP-like (474 aa).

A signal peptide spans 1–26; the sequence is MTRMTRHLALWMLLSLAILASQSAMA. Catalysis depends on charge relay system residues His116, Asp146, and Ser219. Substrate-binding positions include 217–219 and 274–278; these read GNS and LGVMI. PDZ domains are found at residues 263–354 and 360–462; these read LRND…LRNG and TVTV…YRSG.

This sequence belongs to the peptidase S1C family.

It localises to the periplasm. It catalyses the reaction Acts on substrates that are at least partially unfolded. The cleavage site P1 residue is normally between a pair of hydrophobic residues, such as Val-|-Val.. Might be efficient in the degradation of transiently denatured and unfolded proteins which accumulate in the periplasm following stress conditions. The protein is Probable periplasmic serine endoprotease DegP-like (mucD) of Halomonas elongata (strain ATCC 33173 / DSM 2581 / NBRC 15536 / NCIMB 2198 / 1H9).